We begin with the raw amino-acid sequence, 399 residues long: Argininosuccinate synthase (399 aa).

Residues 8–16 (AYSGGLDTS) and Ala35 contribute to the ATP site. L-citrulline is bound at residue Tyr87. An ATP-binding site is contributed by Gly117. Residues Thr119, Asn123, and Asp124 each contribute to the L-aspartate site. Asn123 contacts L-citrulline. The L-citrulline site is built by Arg127, Ser176, Ser185, Glu261, and Tyr273.

It belongs to the argininosuccinate synthase family. Type 1 subfamily. As to quaternary structure, homotetramer.

Its subcellular location is the cytoplasm. It carries out the reaction L-citrulline + L-aspartate + ATP = 2-(N(omega)-L-arginino)succinate + AMP + diphosphate + H(+). The protein operates within amino-acid biosynthesis; L-arginine biosynthesis; L-arginine from L-ornithine and carbamoyl phosphate: step 2/3. The polypeptide is Argininosuccinate synthase (Buchnera aphidicola subsp. Cinara cedri (strain Cc)).